Here is a 245-residue protein sequence, read N- to C-terminus: tRNA pseudouridine synthase A (245 aa).

Residue aspartate 52 is the Nucleophile of the active site. Residue tyrosine 111 participates in substrate binding.

The protein belongs to the tRNA pseudouridine synthase TruA family. In terms of assembly, homodimer.

The enzyme catalyses uridine(38/39/40) in tRNA = pseudouridine(38/39/40) in tRNA. Formation of pseudouridine at positions 38, 39 and 40 in the anticodon stem and loop of transfer RNAs. The polypeptide is tRNA pseudouridine synthase A (Xanthobacter autotrophicus (strain ATCC BAA-1158 / Py2)).